Here is a 442-residue protein sequence, read N- to C-terminus: Glutamate-1-semialdehyde 2,1-aminomutase (442 aa).

K282 carries the N6-(pyridoxal phosphate)lysine modification.

Belongs to the class-III pyridoxal-phosphate-dependent aminotransferase family. HemL subfamily. Homodimer. Pyridoxal 5'-phosphate serves as cofactor.

Its subcellular location is the cytoplasm. It catalyses the reaction (S)-4-amino-5-oxopentanoate = 5-aminolevulinate. Its pathway is porphyrin-containing compound metabolism; protoporphyrin-IX biosynthesis; 5-aminolevulinate from L-glutamyl-tRNA(Glu): step 2/2. This is Glutamate-1-semialdehyde 2,1-aminomutase from Polaromonas sp. (strain JS666 / ATCC BAA-500).